The primary structure comprises 198 residues: FMN-dependent NADH:quinone oxidoreductase (198 aa).

FMN-binding positions include S10, 16–18 (SQS), 94–97 (MYNF), and 138–141 (TRGG).

Belongs to the azoreductase type 1 family. In terms of assembly, homodimer. It depends on FMN as a cofactor.

The enzyme catalyses 2 a quinone + NADH + H(+) = 2 a 1,4-benzosemiquinone + NAD(+). It catalyses the reaction N,N-dimethyl-1,4-phenylenediamine + anthranilate + 2 NAD(+) = 2-(4-dimethylaminophenyl)diazenylbenzoate + 2 NADH + 2 H(+). In terms of biological role, quinone reductase that provides resistance to thiol-specific stress caused by electrophilic quinones. Also exhibits azoreductase activity. Catalyzes the reductive cleavage of the azo bond in aromatic azo compounds to the corresponding amines. The polypeptide is FMN-dependent NADH:quinone oxidoreductase (Shewanella sp. (strain ANA-3)).